We begin with the raw amino-acid sequence, 255 residues long: uncharacterized protein (255 aa).

Disordered stretches follow at residues Cys112–Gly145 and Gly157–Gln183.

This is an uncharacterized protein from Rhodospirillum rubrum.